The following is a 472-amino-acid chain: 2-methylcitrate synthase, mitochondrial (472 aa).

The N-terminal 29 residues, methionine 1–tyrosine 29, are a transit peptide targeting the mitochondrion. Arginine 75 and lysine 193 together coordinate CoA. Histidine 271 contributes to the oxaloacetate binding site. Leucine 306 serves as a coordination point for CoA. The active site involves histidine 307. The CoA site is built by valine 348, glycine 350, and tyrosine 351. The oxaloacetate site is built by histidine 353 and arginine 362. Histidine 353 is a catalytic residue. Threonine 402, lysine 403, and asparagine 408 together coordinate CoA. The active site involves aspartate 410. The oxaloacetate site is built by arginine 436 and arginine 456.

This sequence belongs to the citrate synthase family. Homodimer.

Its subcellular location is the mitochondrion matrix. The catalysed reaction is propanoyl-CoA + oxaloacetate + H2O = (2S,3S)-2-methylcitrate + CoA + H(+). The enzyme catalyses oxaloacetate + acetyl-CoA + H2O = citrate + CoA + H(+). It participates in organic acid metabolism; propanoate degradation. In terms of biological role, component of the methylcitrate cycle that catalyzes the synthesis of (2S,3S)-2-methylcitrate from propionyl-CoA and oxaloacetate. Plays an important role in detoxification of propionyl-CoA, an inhibitor of both primary and secondary metabolism. Also has citrate synthase activity using as substrates acetyl-CoA and oxaloacetate. This is 2-methylcitrate synthase, mitochondrial from Gibberella moniliformis (Maize ear and stalk rot fungus).